The sequence spans 350 residues: Peroxidase 10 (350 aa).

The first 27 residues, 1–27 (MDHKMSMYLFVSYLAIFTLFFKGFVSS), serve as a signal peptide directing secretion. Cystine bridges form between Cys57–Cys137, Cys90–Cys95, Cys143–Cys346, and Cys222–Cys256. His88 (proton acceptor) is an active-site residue. Ca(2+) is bound by residues Asp89, Val92, Gly94, Asp96, and Ser98. The N-linked (GlcNAc...) asparagine glycan is linked to Asn102. Pro185 lines the substrate pocket. Asn193 carries an N-linked (GlcNAc...) asparagine glycan. His215 serves as a coordination point for heme b. A Ca(2+)-binding site is contributed by Thr216. Residues Asp270, Ser273, and Asp278 each contribute to the Ca(2+) site.

This sequence belongs to the peroxidase family. Classical plant (class III) peroxidase subfamily. It depends on heme b as a cofactor. Ca(2+) serves as cofactor. As to expression, expressed in the whole plant, with the highest expression in roots.

The protein localises to the secreted. The enzyme catalyses 2 a phenolic donor + H2O2 = 2 a phenolic radical donor + 2 H2O. In terms of biological role, removal of H(2)O(2), oxidation of toxic reductants, biosynthesis and degradation of lignin, suberization, auxin catabolism, response to environmental stresses such as wounding, pathogen attack and oxidative stress. These functions might be dependent on each isozyme/isoform in each plant tissue. This chain is Peroxidase 10 (PER10), found in Arabidopsis thaliana (Mouse-ear cress).